Consider the following 500-residue polypeptide: Zinc finger and BTB domain-containing protein 34 (500 aa).

The region spanning 32–96 (CDIIVHIQGQ…CYTGRMSLQL (65 aa)) is the BTB domain. The residue at position 164 (serine 164) is a Phosphoserine. A disordered region spans residues 164-209 (SPPYCSQGRQPTASSDLRMETTPSKALRSRLQEEGHSDRGSSGSVS). Residues 193-202 (RLQEEGHSDR) are compositionally biased toward basic and acidic residues. Residues lysine 235 and lysine 237 each participate in a glycyl lysine isopeptide (Lys-Gly) (interchain with G-Cter in SUMO2) cross-link. Residues 236 to 245 (VKMEKSDRPS) are compositionally biased toward basic and acidic residues. Disordered regions lie at residues 236–256 (VKME…GDDG) and 341–360 (SDSE…RERS). 2 C2H2-type zinc fingers span residues 372-394 (LICI…MRLH) and 400-422 (FVCK…IRGH). Residue lysine 426 forms a Glycyl lysine isopeptide (Lys-Gly) (interchain with G-Cter in SUMO2) linkage. The segment at 428–451 (FRCEICGKCFPFQGTLNQHLRKNH) adopts a C2H2-type 3 zinc-finger fold. Position 463 is a phosphoserine (serine 463). Residue lysine 474 forms a Glycyl lysine isopeptide (Lys-Gly) (interchain with G-Cter in SUMO2) linkage. The disordered stretch occupies residues 478–500 (DASASEMGLDSRMEIHTVSDAPD).

As to expression, expressed in several tissues, including heart, brain, thymus, skeletal muscle, small intestine, testis, kidney, placenta, peripheral blood cells and adult and fetal liver.

The protein localises to the nucleus. May be a transcriptional repressor. This is Zinc finger and BTB domain-containing protein 34 (ZBTB34) from Homo sapiens (Human).